The sequence spans 620 residues: Long-chain fatty acid transport protein 2 (620 aa).

Over 1-4 (MLSA) the chain is Lumenal. The chain crosses the membrane as a helical span at residues 5–27 (IYTVLAGLLFLPLLVNLCCPYFF). Residues 28 to 106 (QDIGYFLKVA…DHLGLRQGDC (79 aa)) are Cytoplasmic-facing. Residues 107–127 (VALLMGNEPAYVWLWLGLVKL) form a helical membrane-spanning segment. The Lumenal portion of the chain corresponds to 128–261 (GCAMACLNYN…SGLKADDVIY (134 aa)). An AMP-binding site is contributed by 222 to 233 (YIYTSGTTGLPK). Residues 262 to 282 (ITLPFYHSAALLIGIHGCIVA) traverse the membrane as a helical segment. Topologically, residues 283-620 (GATLALRTKF…NAISAKTLKL (338 aa)) are cytoplasmic. K291 carries the post-translational modification N6-acetyllysine. T577 carries the post-translational modification Phosphothreonine.

It belongs to the ATP-dependent AMP-binding enzyme family. In terms of tissue distribution, expressed in liver, kidney, placenta, intestine, brain, heart, and colon. Predominantly expressed in liver. Expressed in liver, placenta, and intestine, but much lower relative to isoform 1.

The protein localises to the endoplasmic reticulum membrane. It is found in the peroxisome membrane. Its subcellular location is the cell membrane. The protein resides in the microsome. It carries out the reaction a fatty acid(in) = a fatty acid(out). The enzyme catalyses (9Z)-octadecenoate(out) = (9Z)-octadecenoate(in). The catalysed reaction is a long-chain fatty acid + ATP + CoA = a long-chain fatty acyl-CoA + AMP + diphosphate. It catalyses the reaction (5Z,8Z,11Z,14Z)-eicosatetraenoate + ATP + CoA = (5Z,8Z,11Z,14Z)-eicosatetraenoyl-CoA + AMP + diphosphate. It carries out the reaction hexadecanoate + ATP + CoA = hexadecanoyl-CoA + AMP + diphosphate. The enzyme catalyses (9Z)-octadecenoate + ATP + CoA = (9Z)-octadecenoyl-CoA + AMP + diphosphate. The catalysed reaction is 3,7,11,15-tetramethylhexadecanoate + ATP + CoA = phytanoyl-CoA + AMP + diphosphate. It catalyses the reaction (9Z,12Z,15Z)-octadecatrienoate + ATP + CoA = (9Z,12Z,15Z)-octadecatrienoyl-CoA + AMP + diphosphate. It carries out the reaction 2,6,10,14-tetramethylpentadecanoate + ATP + CoA = pristanoyl-CoA + AMP + diphosphate. The enzyme catalyses (E)-hexadec-2-enoate + ATP + CoA = (2E)-hexadecenoyl-CoA + AMP + diphosphate. The catalysed reaction is a very long-chain fatty acid + ATP + CoA = a very long-chain fatty acyl-CoA + AMP + diphosphate. It catalyses the reaction tetracosanoate + ATP + CoA = tetracosanoyl-CoA + AMP + diphosphate. It carries out the reaction (4Z,7Z,10Z,13Z,16Z,19Z)-docosahexaenoate + ATP + CoA = (4Z,7Z,10Z,13Z,16Z,19Z)-docosahexaenoyl-CoA + AMP + diphosphate. The enzyme catalyses (25R)-3alpha,7alpha,12alpha-trihydroxy-5beta-cholestan-26-oate + ATP + CoA = (25R)-3alpha,7alpha,12alpha-trihydroxy-5beta-cholestan-26-oyl-CoA + AMP + diphosphate. Functionally, mediates the import of long-chain fatty acids (LCFA) into the cell by facilitating their transport across cell membranes, playing an important role in hepatic fatty acid uptake. Also functions as an acyl-CoA ligase catalyzing the ATP-dependent formation of fatty acyl-CoA using LCFA and very-long-chain fatty acids (VLCFA) as substrates, which prevents fatty acid efflux from cells and might drive more fatty acid uptake. Plays a pivotal role in regulating available LCFA substrates from exogenous sources in tissues undergoing high levels of beta-oxidation or triglyceride synthesis. Can also activate branched-chain fatty acids such as phytanic acid and pristanic acid. May contribute to the synthesis of sphingosine-1-phosphate. Does not activate C24 bile acids, cholate and chenodeoxycholate. In vitro, activates 3-alpha,7-alpha,12-alpha-trihydroxy-5-beta-cholestanate (THCA), the C27 precursor of cholic acid deriving from the de novo synthesis from cholesterol. However, it is not critical for THCA activation and bile synthesis in vivo. Exhibits both long-chain fatty acids (LCFA) transport activity and acyl CoA synthetase towards very long-chain fatty acids. Shows a preference for generating CoA derivatives of n-3 fatty acids, which are preferentially trafficked into phosphatidylinositol. Its function is as follows. Exhibits long-chain fatty acids (LCFA) transport activity but lacks acyl CoA synthetase towards very long-chain fatty acids. This is Long-chain fatty acid transport protein 2 (SLC27A2) from Homo sapiens (Human).